Here is a 135-residue protein sequence, read N- to C-terminus: FK506-binding protein 2 (135 aa).

An N-terminal signal peptide occupies residues M1–A20. A PPIase FKBP-type domain is found at G40 to E128. The Prevents secretion from ER motif lies at K132–L135.

Belongs to the FKBP-type PPIase family. FKBP2 subfamily.

It localises to the endoplasmic reticulum. It carries out the reaction [protein]-peptidylproline (omega=180) = [protein]-peptidylproline (omega=0). Inhibited by both FK506 and rapamycin. PPIases accelerate the folding of proteins. It catalyzes the cis-trans isomerization of proline imidic peptide bonds in oligopeptides. The sequence is that of FK506-binding protein 2 (fkbB) from Emericella nidulans (strain FGSC A4 / ATCC 38163 / CBS 112.46 / NRRL 194 / M139) (Aspergillus nidulans).